The primary structure comprises 244 residues: MNPQLSPKAIREIREGTCNPLGAPQVTTDLSENIILTSLDDLHNWARLSSLWPLLYGTACCFIEFAALIGSRFDFDRFGLVPRSSPRQADLLIVAGTVTMKMAPALVRLYEQMPEPKYVIAMGACTITGGMFSADSTTAVRGVDKLIPVDLYLPGCPPRPEAIFDAVIKLRKKVGNESILERTKTEQTHRYITSDHEMNLVFSENTGEYLNKTSANSIPSSKKEKITELPDNNEKAEIIDTLEN.

[4Fe-4S] cluster contacts are provided by C60, C61, C125, and C156. Residues 213 to 244 form a disordered region; the sequence is TSANSIPSSKKEKITELPDNNEKAEIIDTLEN. The segment covering 221-238 has biased composition (basic and acidic residues); it reads SKKEKITELPDNNEKAEI.

Belongs to the complex I 20 kDa subunit family. NDH-1 can be composed of about 15 different subunits; different subcomplexes with different compositions have been identified which probably have different functions. [4Fe-4S] cluster is required as a cofactor.

Its subcellular location is the cellular thylakoid membrane. The enzyme catalyses a plastoquinone + NADH + (n+1) H(+)(in) = a plastoquinol + NAD(+) + n H(+)(out). It catalyses the reaction a plastoquinone + NADPH + (n+1) H(+)(in) = a plastoquinol + NADP(+) + n H(+)(out). In terms of biological role, NDH-1 shuttles electrons from an unknown electron donor, via FMN and iron-sulfur (Fe-S) centers, to quinones in the respiratory and/or the photosynthetic chain. The immediate electron acceptor for the enzyme in this species is believed to be plastoquinone. Couples the redox reaction to proton translocation, and thus conserves the redox energy in a proton gradient. Cyanobacterial NDH-1 also plays a role in inorganic carbon-concentration. This Prochlorococcus marinus (strain MIT 9301) protein is NAD(P)H-quinone oxidoreductase subunit K.